The chain runs to 156 residues: Regulatory protein RecX (156 aa).

Belongs to the RecX family.

It localises to the cytoplasm. Its function is as follows. Modulates RecA activity. The chain is Regulatory protein RecX from Pseudomonas putida (strain ATCC 700007 / DSM 6899 / JCM 31910 / BCRC 17059 / LMG 24140 / F1).